The chain runs to 130 residues: Large ribosomal subunit protein bL17 (130 aa).

This sequence belongs to the bacterial ribosomal protein bL17 family. As to quaternary structure, part of the 50S ribosomal subunit. Contacts protein L32.

The protein is Large ribosomal subunit protein bL17 of Buchnera aphidicola subsp. Acyrthosiphon pisum (strain APS) (Acyrthosiphon pisum symbiotic bacterium).